Here is a 142-residue protein sequence, read N- to C-terminus: Ribosome maturation factor RimP (142 aa).

Belongs to the RimP family.

The protein localises to the cytoplasm. In terms of biological role, required for maturation of 30S ribosomal subunits. In Nitrosospira multiformis (strain ATCC 25196 / NCIMB 11849 / C 71), this protein is Ribosome maturation factor RimP.